The chain runs to 218 residues: Transcription initiation factor TFIID subunit 10 (218 aa).

Composition is skewed to low complexity over residues 1–21 and 29–39; these read MSCS…ASAP and APAALPSSTAA. A disordered region spans residues 1-85; that stretch reads MSCSGSGADP…GAAPVSAGGA (85 aa). S2 is subject to N-acetylserine. S44 carries the post-translational modification Phosphoserine. Position 48 is a phosphothreonine (T48). Residues 48 to 62 are compositionally biased toward gly residues; sequence TAGGPGAGAAAGGTG. The [KR]-[STA]-K motif motif lies at 187 to 189; that stretch reads KSK. K189 bears the Allysine; alternate mark. The residue at position 189 (K189) is an N6,N6,N6-trimethyllysine; alternate.

This sequence belongs to the TAF10 family. Component of the TFIID basal transcription factor complex, composed of TATA-box-binding protein TBP, and a number of TBP-associated factors (TAFs), including TAF1, TAF2, TAF3, TAF4, TAF5, TAF6, TAF7, TAF8, TAF9, TAF10, TAF11, TAF12 and TAF13. Component of the TATA-binding protein-free TAF complex (TFTC), the PCAF histone acetylase complex and the STAGA transcription coactivator-HAT complex. The PCAF complex consists at least of TADA2L/ADA2, TADA3L/ADA3, SUPT3H, TAF5L TAF6L, TAF9, TAF10, TAF12 and TRRAP. The TFTC-HAT complex consists at least of TAF5L, TAF6L, TADA3L, SUPT3H, TAF2, TAF4, TAF5, GCN5L2/GCN5, TAF10 and TRRAP. The STAGA transcription coactivator-HAT complex consists at least of SUPT3H, GCN5L2, TAF5L, TAF6L, SUPT7L, TADA3L, TAD1L, TAF10, TAF12, TRRAP and TAF9. The STAGA core complex is associated with a subcomplex required for histone deubiquitination composed of ATXN7L3, ENY2 and USP22. Interacts with TAF3. Interacts with LOXL2. Interacts with TAF12 isoform TAFII20; the interaction is direct. Post-translationally, monomethylated at Lys-189 by SETD7, leading to increased affinity for RNA polymerase II. In terms of processing, lysine deamination at Lys-189 to form allysine is mediated by LOXL2. Allysine formation by LOXL2 results in release of TAF10 from promoters, leading to inhibition of TFIID-dependent transcription.

The protein resides in the nucleus. In terms of biological role, the TFIID basal transcription factor complex plays a major role in the initiation of RNA polymerase II (Pol II)-dependent transcription. TFIID recognizes and binds promoters with or without a TATA box via its subunit TBP, a TATA-box-binding protein, and promotes assembly of the pre-initiation complex (PIC). The TFIID complex consists of TBP and TBP-associated factors (TAFs), including TAF1, TAF2, TAF3, TAF4, TAF5, TAF6, TAF7, TAF8, TAF9, TAF10, TAF11, TAF12 and TAF13. TAF10 is also component of the PCAF histone acetylase complex, the TATA-binding protein-free TAF complex (TFTC) and the STAGA transcription coactivator-HAT complex. May regulate cyclin E expression. The chain is Transcription initiation factor TFIID subunit 10 (TAF10) from Homo sapiens (Human).